Reading from the N-terminus, the 212-residue chain is Cytidylate kinase (212 aa).

7–15 is an ATP binding site; the sequence is GPAASGKGT.

Belongs to the cytidylate kinase family. Type 1 subfamily.

The protein localises to the cytoplasm. The enzyme catalyses CMP + ATP = CDP + ADP. It carries out the reaction dCMP + ATP = dCDP + ADP. The protein is Cytidylate kinase of Rhodopseudomonas palustris (strain HaA2).